Consider the following 139-residue polypeptide: Transcription antitermination protein NusB (139 aa).

Belongs to the NusB family.

Functionally, involved in transcription antitermination. Required for transcription of ribosomal RNA (rRNA) genes. Binds specifically to the boxA antiterminator sequence of the ribosomal RNA (rrn) operons. The protein is Transcription antitermination protein NusB of Edwardsiella ictaluri (strain 93-146).